Consider the following 311-residue polypeptide: Formimidoylglutamase (311 aa).

6 residues coordinate Mn(2+): histidine 127, aspartate 152, histidine 154, aspartate 156, cysteine 236, and aspartate 238.

The protein belongs to the arginase family. Mn(2+) is required as a cofactor.

The enzyme catalyses N-formimidoyl-L-glutamate + H2O = formamide + L-glutamate. Its pathway is amino-acid degradation; L-histidine degradation into L-glutamate; L-glutamate from N-formimidoyl-L-glutamate (hydrolase route): step 1/1. Its function is as follows. Catalyzes the conversion of N-formimidoyl-L-glutamate to L-glutamate and formamide. In Macrococcus caseolyticus (strain JCSC5402) (Macrococcoides caseolyticum), this protein is Formimidoylglutamase.